The chain runs to 361 residues: Queuine tRNA-ribosyltransferase (361 aa).

D92 (proton acceptor) is an active-site residue. Residues 92 to 96 (DSGGF), D146, Q189, and G216 each bind substrate. Positions 247–253 (GVGKPVD) are RNA binding. D266 acts as the Nucleophile in catalysis. An RNA binding; important for wobble base 34 recognition region spans residues 271 to 275 (TRSGR). C304, C306, C309, and H335 together coordinate Zn(2+).

It belongs to the queuine tRNA-ribosyltransferase family. In terms of assembly, homodimer. Within each dimer, one monomer is responsible for RNA recognition and catalysis, while the other monomer binds to the replacement base PreQ1. Requires Zn(2+) as cofactor.

The enzyme catalyses 7-aminomethyl-7-carbaguanine + guanosine(34) in tRNA = 7-aminomethyl-7-carbaguanosine(34) in tRNA + guanine. Its pathway is tRNA modification; tRNA-queuosine biosynthesis. Its function is as follows. Catalyzes the base-exchange of a guanine (G) residue with the queuine precursor 7-aminomethyl-7-deazaguanine (PreQ1) at position 34 (anticodon wobble position) in tRNAs with GU(N) anticodons (tRNA-Asp, -Asn, -His and -Tyr). Catalysis occurs through a double-displacement mechanism. The nucleophile active site attacks the C1' of nucleotide 34 to detach the guanine base from the RNA, forming a covalent enzyme-RNA intermediate. The proton acceptor active site deprotonates the incoming PreQ1, allowing a nucleophilic attack on the C1' of the ribose to form the product. After dissociation, two additional enzymatic reactions on the tRNA convert PreQ1 to queuine (Q), resulting in the hypermodified nucleoside queuosine (7-(((4,5-cis-dihydroxy-2-cyclopenten-1-yl)amino)methyl)-7-deazaguanosine). The chain is Queuine tRNA-ribosyltransferase from Rickettsia africae (strain ESF-5).